Here is a 274-residue protein sequence, read N- to C-terminus: 2,3,4,5-tetrahydropyridine-2,6-dicarboxylate N-succinyltransferase (274 aa).

Residues arginine 104 and aspartate 141 each contribute to the substrate site.

The protein belongs to the transferase hexapeptide repeat family. In terms of assembly, homotrimer.

It is found in the cytoplasm. It catalyses the reaction (S)-2,3,4,5-tetrahydrodipicolinate + succinyl-CoA + H2O = (S)-2-succinylamino-6-oxoheptanedioate + CoA. It functions in the pathway amino-acid biosynthesis; L-lysine biosynthesis via DAP pathway; LL-2,6-diaminopimelate from (S)-tetrahydrodipicolinate (succinylase route): step 1/3. The chain is 2,3,4,5-tetrahydropyridine-2,6-dicarboxylate N-succinyltransferase from Photorhabdus laumondii subsp. laumondii (strain DSM 15139 / CIP 105565 / TT01) (Photorhabdus luminescens subsp. laumondii).